The primary structure comprises 188 residues: Peptide deformylase (188 aa).

C109 and H152 together coordinate Fe cation. E153 is an active-site residue. H156 serves as a coordination point for Fe cation.

Belongs to the polypeptide deformylase family. Fe(2+) serves as cofactor.

The catalysed reaction is N-terminal N-formyl-L-methionyl-[peptide] + H2O = N-terminal L-methionyl-[peptide] + formate. Removes the formyl group from the N-terminal Met of newly synthesized proteins. Requires at least a dipeptide for an efficient rate of reaction. N-terminal L-methionine is a prerequisite for activity but the enzyme has broad specificity at other positions. The protein is Peptide deformylase of Chloroflexus aurantiacus (strain ATCC 29366 / DSM 635 / J-10-fl).